A 434-amino-acid chain; its full sequence is Bestrophin homolog 12 (434 aa).

4 consecutive transmembrane segments (helical) span residues 31–51 (KVILHEFLMTAGAYFGVFLVF), 76–96 (VCIPMQMMLAFFIATVADQWE), 244–264 (IPIPLAYPQAVFLAVRIYFFF), and 278–298 (WALSHWGFPLLTTLQFIFLVG).

This sequence belongs to the anion channel-forming bestrophin (TC 1.A.46) family. Calcium-sensitive chloride channel subfamily. Forms oligomers.

Its subcellular location is the cell membrane. Forms chloride channels. In Caenorhabditis elegans, this protein is Bestrophin homolog 12 (best-12).